Consider the following 407-residue polypeptide: Methyltransferase/ribosomally synthesized type I borosin cyclic peptide precursor ceuMA2 (407 aa).

Positions 1–246 (MATTKTGSLT…TTSTLYIPPR (246 aa)) are methyltransferase domain. Residues Arg70, Tyr74, and Tyr96 contribute to the active site. Tyr96, His98, Val101, Ala128, Gln170, Gly208, Ser239, and Thr240 together coordinate S-adenosyl-L-methionine. The clasp domain stretch occupies residues 247–370 (EIAPVDQRIM…GPVYKVMRAT (124 aa)). A precursor leader region spans residues 371–393 (PAAIAAGQEHSLDEIAGSADSES). An N-methylthreonine mark is found at Thr399 and Thr400. N-methylisoleucine is present on Ile401. Val402 and Val403 each carry N-methylvaline. N-methylisoleucine is present on Ile404. Position 405 is an N-methylvaline (Val405). At His406 the chain carries N-methylhistidine.

In the N-terminal section; belongs to the precorrin methyltransferase family. In terms of assembly, homodimer. Post-translationally, ceuMA2 automethylates at Thr-399, Thr-400, Ile-401, Val-402, Val-403, Ile-404, Val-405 and His-406 before being processed by a prolyloligopeptidase which likely forms a peptidyl ester upon removal of the follower propeptide, which then undergoes macrocyclization with the N-terminus of the modified core peptide. Peptide backbone alpha-N-methylations change the physicochemical properties of amide bonds to provide structural constraints and other favorable characteristics including biological membrane permeability to peptides.

Its pathway is secondary metabolite biosynthesis. Its function is as follows. Fusion protein of the methyltransferase ceuM2 and a type I borosin core peptide; part of the gene cluster that mediates the biosynthesis of a type I borosin, a highly methylated cyclic peptide with potent biological activities. Type I borosins derive from the C-terminus of the fusion protein, and it is the same protein that methylates its own C-terminus using S-adenosyl methionine (SAM). The C-terminus is subsequently cleaved off and macrocyclized by a prolyloligopeptidase to give the final product. The sequence is that of Methyltransferase/ribosomally synthesized type I borosin cyclic peptide precursor ceuMA2 from Cerrena unicolor (Canker rot fungus).